The chain runs to 197 residues: Potassium-transporting ATPase KdpC subunit (197 aa).

The chain crosses the membrane as a helical span at residues 7-27 (PAFISLILFTLLFGLIYPLTV).

Belongs to the KdpC family. In terms of assembly, the system is composed of three essential subunits: KdpA, KdpB and KdpC.

It localises to the cell inner membrane. Part of the high-affinity ATP-driven potassium transport (or Kdp) system, which catalyzes the hydrolysis of ATP coupled with the electrogenic transport of potassium into the cytoplasm. This subunit acts as a catalytic chaperone that increases the ATP-binding affinity of the ATP-hydrolyzing subunit KdpB by the formation of a transient KdpB/KdpC/ATP ternary complex. This chain is Potassium-transporting ATPase KdpC subunit, found in Beijerinckia indica subsp. indica (strain ATCC 9039 / DSM 1715 / NCIMB 8712).